We begin with the raw amino-acid sequence, 170 residues long: Peptide deformylase (170 aa).

Residues Cys94 and His136 each contribute to the Fe cation site. Glu137 is an active-site residue. His140 contributes to the Fe cation binding site.

It belongs to the polypeptide deformylase family. Fe(2+) serves as cofactor.

The catalysed reaction is N-terminal N-formyl-L-methionyl-[peptide] + H2O = N-terminal L-methionyl-[peptide] + formate. Removes the formyl group from the N-terminal Met of newly synthesized proteins. Requires at least a dipeptide for an efficient rate of reaction. N-terminal L-methionine is a prerequisite for activity but the enzyme has broad specificity at other positions. The protein is Peptide deformylase of Stenotrophomonas maltophilia (strain K279a).